Reading from the N-terminus, the 428-residue chain is MKFSEEKNVSNNPTNFEGGLDSRKVGQNRRALGVINQNLVVEGRPYPCVVNKRALSERNDVCEKKQADPVHRPITRRFAAKIASTKTSNAEGTTKRSNLAKSSSNGFGDFIFVDDEHKPVEDQPVPMALEQTEPMHSESDQMEEVEMEDIMEEPVMDIDTPDANDPLAVAEYIEDLYSYYRKVESTSCVSPNYMAQQFDINERMRAILVDWLIEVHDKFDLMHETLFLTVNLIDRFLEKQSVVRKKLQLVGLVAMLLACKYEEVSVPVVGDLILISDRAYTRKEVLEMEKVMVNALKFNISVPTAYVFMRRFLKAAQADRKLELLAFFLIELSLVEYAMLKFSPSQLAAAAVYTAQCTMYGVKQWSKTCEWHTNYSEDQLLECSSLMVDFHKKAGTGKLTGAHRKYCTSKFSYTAKCEPASFLLENEL.

The segment at 1 to 22 (MKFSEEKNVSNNPTNFEGGLDS) is disordered.

This sequence belongs to the cyclin family. Cyclin AB subfamily. In terms of assembly, interacts with the CDC2 protein kinase to form a serine/threonine kinase holoenzyme complex also known as maturation promoting factor (MPF). The cyclin subunit imparts substrate specificity to the complex.

Functionally, essential for the control of the cell cycle at the G2/M (mitosis) transition. This is G2/mitotic-specific cyclin-1 from Medicago sativa subsp. varia (Alfalfa).